Here is a 342-residue protein sequence, read N- to C-terminus: MLKFIQNNREITALLAVVLLFVLPGFLDRQYLSVQTLTMVYSSAQILILLAMGATLVMLTRNIDVSVGSITGMCAVLLGMLLNAGYSLPVACVATLLLGLLAGFFNGVLVAWLKIPAIVATLGTLGLYRGIMLLWTGGKWIEGLPAELKQLSAPLLLGVSAIGWLTIILVAFMAWLLAKTAFGRSFYATGDNLQGARQLGVRTEAIRIVAFSLNGCMAALAGIVFASQIGFIPNQTGTGLEMKAIAACVLGGISLLGGSGAIIGAVLGAWFLTQIDSVLVLLRIPAWWNDFIAGLVLLAVLVFDGRLRCALERNLRRQKYARFMTPPPSVKPASSGKKREAA.

At methionine 1 to alanine 13 the chain is on the periplasmic side. A helical transmembrane segment spans residues leucine 14–valine 34. The Cytoplasmic segment spans residues glutamine 35–threonine 38. A helical membrane pass occupies residues methionine 39–leucine 59. Topologically, residues threonine 60–serine 69 are periplasmic. A helical transmembrane segment spans residues isoleucine 70–valine 90. Topologically, residues alanine 91 to cysteine 92 are cytoplasmic. Residues valine 93–leucine 113 form a helical membrane-spanning segment. Lysine 114 is a topological domain (periplasmic). The helical transmembrane segment at isoleucine 115–tryptophan 135 threads the bilayer. At threonine 136 to proline 154 the chain is on the cytoplasmic side. Residues leucine 155–tryptophan 175 traverse the membrane as a helical segment. Over leucine 176 to serine 212 the chain is Periplasmic. A helical transmembrane segment spans residues leucine 213–proline 233. Residues asparagine 234–glycine 251 lie on the Cytoplasmic side of the membrane. Residues glycine 252–leucine 272 form a helical membrane-spanning segment. Over threonine 273–arginine 283 the chain is Periplasmic. The chain crosses the membrane as a helical span at residues isoleucine 284–aspartate 304. The Cytoplasmic portion of the chain corresponds to glycine 305–alanine 342.

The protein belongs to the binding-protein-dependent transport system permease family. AraH/RbsC subfamily. As to quaternary structure, the complex is composed of two ATP-binding proteins (LsrA), two transmembrane proteins (LsrC and LsrD) and a solute-binding protein (LsrB).

Its subcellular location is the cell inner membrane. Functionally, part of the ABC transporter complex LsrABCD involved in autoinducer 2 (AI-2) import. Probably responsible for the translocation of the substrate across the membrane. The chain is Autoinducer 2 import system permease protein LsrC (lsrC) from Escherichia coli (strain K12 / DH10B).